The following is a 251-amino-acid chain: Zwei Ig domain protein zig-3 (251 aa).

A signal peptide spans 1–19 (MLLICISVLAAISAHPLSS). 2 consecutive Ig-like C2-type domains span residues 42–144 (PSLK…AKIS) and 160–244 (PVIT…TFLY). 2 disulfide bridges follow: Cys-65-Cys-128 and Cys-181-Cys-228.

In terms of tissue distribution, expressed in PVT, AIM and ASI neurons, in vulva and weakly in body wall muscles.

The protein localises to the secreted. Functionally, required for maintaining axon position of PVQ and PVP neurons postembryonically in the ventral nerve cord (VNC) by preventing axons drifting into the opposite side of the VNC that could occur during body growth and movement. The sequence is that of Zwei Ig domain protein zig-3 from Caenorhabditis elegans.